Here is a 298-residue protein sequence, read N- to C-terminus: 4-hydroxy-tetrahydrodipicolinate synthase (298 aa).

Residue Thr51 participates in pyruvate binding. Tyr140 acts as the Proton donor/acceptor in catalysis. Lys168 serves as the catalytic Schiff-base intermediate with substrate. Ile210 contacts pyruvate.

This sequence belongs to the DapA family. Homotetramer; dimer of dimers.

Its subcellular location is the cytoplasm. It catalyses the reaction L-aspartate 4-semialdehyde + pyruvate = (2S,4S)-4-hydroxy-2,3,4,5-tetrahydrodipicolinate + H2O + H(+). It participates in amino-acid biosynthesis; L-lysine biosynthesis via DAP pathway; (S)-tetrahydrodipicolinate from L-aspartate: step 3/4. Catalyzes the condensation of (S)-aspartate-beta-semialdehyde [(S)-ASA] and pyruvate to 4-hydroxy-tetrahydrodipicolinate (HTPA). This is 4-hydroxy-tetrahydrodipicolinate synthase from Acidovorax sp. (strain JS42).